We begin with the raw amino-acid sequence, 128 residues long: Keratin-associated protein 2-3 (128 aa).

The 10 X 5 AA repeats of C-C-[CDPQRWG]-[APRS]-[CIPSTVD] stretch occupies residues 5–112; it reads CCGSTLSSLS…SVQSPCCRPP (108 aa).

Belongs to the KRTAP type 2 family. As to quaternary structure, interacts with hair keratins.

In the hair cortex, hair keratin intermediate filaments are embedded in an interfilamentous matrix, consisting of hair keratin-associated proteins (KRTAP), which are essential for the formation of a rigid and resistant hair shaft through their extensive disulfide bond cross-linking with abundant cysteine residues of hair keratins. The matrix proteins include the high-sulfur and high-glycine-tyrosine keratins. The sequence is that of Keratin-associated protein 2-3 (KRTAP2-3) from Homo sapiens (Human).